A 451-amino-acid chain; its full sequence is Phosphoglucosamine mutase (451 aa).

S103 functions as the Phosphoserine intermediate in the catalytic mechanism. Mg(2+) contacts are provided by S103, D243, D245, and D247. S103 carries the phosphoserine modification.

The protein belongs to the phosphohexose mutase family. Mg(2+) is required as a cofactor. In terms of processing, activated by phosphorylation.

It carries out the reaction alpha-D-glucosamine 1-phosphate = D-glucosamine 6-phosphate. In terms of biological role, catalyzes the conversion of glucosamine-6-phosphate to glucosamine-1-phosphate. The polypeptide is Phosphoglucosamine mutase (Limosilactobacillus reuteri subsp. reuteri (strain JCM 1112) (Lactobacillus reuteri)).